A 138-amino-acid polypeptide reads, in one-letter code: Thyrotropin subunit beta (138 aa).

A signal peptide spans 1 to 20; the sequence is MTAIFLMSMLFGLACGQAMS. 6 disulfides stabilise this stretch: cysteine 22–cysteine 72, cysteine 36–cysteine 87, cysteine 39–cysteine 125, cysteine 47–cysteine 103, cysteine 51–cysteine 105, and cysteine 108–cysteine 115. N-linked (GlcNAc...) asparagine glycosylation occurs at asparagine 43. The propeptide occupies 133–138; it reads VLEFSI.

The protein belongs to the glycoprotein hormones subunit beta family. In terms of assembly, heterodimer of a common alpha chain and a unique beta chain which confers biological specificity to thyrotropin, lutropin, follitropin and gonadotropin.

The protein localises to the secreted. Indispensable for the control of thyroid structure and metabolism. This chain is Thyrotropin subunit beta (TSHB), found in Sus scrofa (Pig).